A 67-amino-acid polypeptide reads, in one-letter code: ATP synthase F(0) complex subunit 8 (67 aa).

A helical membrane pass occupies residues 8–24; sequence TWFIMIFSMFLTLFILF. N6-acetyllysine; alternate is present on K54. Residue K54 is modified to N6-succinyllysine; alternate. Residue K57 is modified to N6-acetyllysine.

The protein belongs to the ATPase protein 8 family. As to quaternary structure, component of the ATP synthase complex composed at least of ATP5F1A/subunit alpha, ATP5F1B/subunit beta, ATP5MC1/subunit c (homooctomer), MT-ATP6/subunit a, MT-ATP8/subunit 8, ATP5ME/subunit e, ATP5MF/subunit f, ATP5MG/subunit g, ATP5MK/subunit k, ATP5MJ/subunit j, ATP5F1C/subunit gamma, ATP5F1D/subunit delta, ATP5F1E/subunit epsilon, ATP5PF/subunit F6, ATP5PB/subunit b, ATP5PD/subunit d, ATP5PO/subunit OSCP. ATP synthase complex consists of a soluble F(1) head domain (subunits alpha(3) and beta(3)) - the catalytic core - and a membrane F(0) domain - the membrane proton channel (subunits c, a, 8, e, f, g, k and j). These two domains are linked by a central stalk (subunits gamma, delta, and epsilon) rotating inside the F1 region and a stationary peripheral stalk (subunits F6, b, d, and OSCP). Interacts with PRICKLE3.

The protein localises to the mitochondrion membrane. Subunit 8, of the mitochondrial membrane ATP synthase complex (F(1)F(0) ATP synthase or Complex V) that produces ATP from ADP in the presence of a proton gradient across the membrane which is generated by electron transport complexes of the respiratory chain. ATP synthase complex consist of a soluble F(1) head domain - the catalytic core - and a membrane F(1) domain - the membrane proton channel. These two domains are linked by a central stalk rotating inside the F(1) region and a stationary peripheral stalk. During catalysis, ATP synthesis in the catalytic domain of F(1) is coupled via a rotary mechanism of the central stalk subunits to proton translocation. In vivo, can only synthesize ATP although its ATP hydrolase activity can be activated artificially in vitro. Part of the complex F(0) domain. The protein is ATP synthase F(0) complex subunit 8 of Canis lupus familiaris (Dog).